Consider the following 442-residue polypeptide: Trigger factor (442 aa).

The PPIase FKBP-type domain maps to 163 to 248; that stretch reads YDRVTINYCI…IIKIEKKQEL (86 aa).

Belongs to the FKBP-type PPIase family. Tig subfamily.

Its subcellular location is the cytoplasm. The enzyme catalyses [protein]-peptidylproline (omega=180) = [protein]-peptidylproline (omega=0). In terms of biological role, involved in protein export. Acts as a chaperone by maintaining the newly synthesized protein in an open conformation. Functions as a peptidyl-prolyl cis-trans isomerase. This Buchnera aphidicola subsp. Acyrthosiphon pisum (strain APS) (Acyrthosiphon pisum symbiotic bacterium) protein is Trigger factor (tig).